Here is a 292-residue protein sequence, read N- to C-terminus: 33 kDa chaperonin (292 aa).

Disulfide bonds link Cys230-Cys232 and Cys263-Cys266.

The protein belongs to the HSP33 family. Under oxidizing conditions two disulfide bonds are formed involving the reactive cysteines. Under reducing conditions zinc is bound to the reactive cysteines and the protein is inactive.

It localises to the cytoplasm. Redox regulated molecular chaperone. Protects both thermally unfolding and oxidatively damaged proteins from irreversible aggregation. Plays an important role in the bacterial defense system toward oxidative stress. This chain is 33 kDa chaperonin, found in Shigella dysenteriae serotype 1 (strain Sd197).